The sequence spans 180 residues: Large ribosomal subunit protein uL5 (180 aa).

It belongs to the universal ribosomal protein uL5 family. As to quaternary structure, part of the 50S ribosomal subunit; part of the 5S rRNA/L5/L18/L25 subcomplex. Contacts the 5S rRNA and the P site tRNA. Forms a bridge to the 30S subunit in the 70S ribosome.

In terms of biological role, this is one of the proteins that bind and probably mediate the attachment of the 5S RNA into the large ribosomal subunit, where it forms part of the central protuberance. In the 70S ribosome it contacts protein S13 of the 30S subunit (bridge B1b), connecting the 2 subunits; this bridge is implicated in subunit movement. Contacts the P site tRNA; the 5S rRNA and some of its associated proteins might help stabilize positioning of ribosome-bound tRNAs. This chain is Large ribosomal subunit protein uL5, found in Stenotrophomonas maltophilia (strain R551-3).